Consider the following 236-residue polypeptide: Small ribosomal subunit protein uS2c (236 aa).

This sequence belongs to the universal ribosomal protein uS2 family.

Its subcellular location is the plastid. It is found in the chloroplast. The chain is Small ribosomal subunit protein uS2c (rps2) from Liriodendron tulipifera (Tuliptree).